A 43-amino-acid chain; its full sequence is Protein PsbN (43 aa).

Residues 4–24 traverse the membrane as a helical segment; that stretch reads ATFVAIFISCLLISFTGYALY.

It belongs to the PsbN family.

It is found in the plastid. Its subcellular location is the chloroplast thylakoid membrane. Functionally, may play a role in photosystem I and II biogenesis. This is Protein PsbN from Marchantia polymorpha (Common liverwort).